The following is a 248-amino-acid chain: Probable transcriptional regulatory protein RPC_4807 (248 aa).

The interval M1–K21 is disordered.

This sequence belongs to the TACO1 family.

The protein localises to the cytoplasm. The sequence is that of Probable transcriptional regulatory protein RPC_4807 from Rhodopseudomonas palustris (strain BisB18).